The sequence spans 517 residues: Putative transporter C543.05c (517 aa).

Helical transmembrane passes span 68 to 88 (SFGV…FALL), 93 to 113 (LCIV…YDIM), 121 to 141 (FPFL…IAIA), 155 to 175 (CEIF…QVLC), 186 to 206 (FLSI…DTVG), 217 to 237 (ILLL…FQHI), 269 to 289 (IPVG…ILFY), 311 to 331 (GFHW…ILGI), 377 to 397 (SNFI…LLVL), 403 to 423 (CVLA…NGIT), and 449 to 471 (RVVW…ITQV).

It belongs to the anion exchanger (TC 2.A.31) family.

It is found in the vacuole membrane. In Schizosaccharomyces pombe (strain 972 / ATCC 24843) (Fission yeast), this protein is Putative transporter C543.05c.